The sequence spans 793 residues: DnaJ homolog subfamily C member 10 (793 aa).

The first 32 residues, 1-32, serve as a signal peptide directing secretion; the sequence is MGVWLNRDEFIRDVKRISLCLLVLYVVIVVGT. In terms of domain architecture, J spans 35–100; it reads NFYSLLGVSK…DLRKKYDKYG (66 aa). The Thioredoxin 1 domain occupies 130-232; it reads EIITLERREF…ESLVSFAMQH (103 aa). Cys158 and Cys161 are joined by a disulfide. Trxb stretches follow at residues 235–350 and 348–463; these read TTVT…LPDF and PDFE…PQNF. 3 consecutive Thioredoxin domains span residues 454-553, 557-665, and 671-776; these read HVTT…IEDL, SVVS…SWGL, and ASID…ALIY. An intrachain disulfide couples Cys480 to Cys483. A glycan (N-linked (GlcNAc...) asparagine) is linked at Asn530. 2 cysteine pairs are disulfide-bonded: Cys588–Cys591 and Cys700–Cys703. The Prevents secretion from ER motif lies at 790–793; sequence KDEL.

Interacts with HSPA5 (via its J domain). Interacts with EDEM1.

The protein resides in the endoplasmic reticulum lumen. In terms of biological role, endoplasmic reticulum disulfide reductase involved both in the correct folding of proteins and degradation of misfolded proteins. Required for efficient folding of proteins in the endoplasmic reticulum by catalyzing the removal of non-native disulfide bonds formed during the folding of proteins, such as LDLR. Also involved in endoplasmic reticulum-associated degradation (ERAD) by reducing incorrect disulfide bonds in misfolded glycoproteins recognized by EDEM1. Interaction with HSPA5 is required its activity, not for the disulfide reductase activity, but to facilitate the release of DNAJC10 from its substrate. Promotes apoptotic signaling pathway in response to endoplasmic reticulum stress. The sequence is that of DnaJ homolog subfamily C member 10 (Dnajc10) from Rattus norvegicus (Rat).